The chain runs to 956 residues: Thrombospondin-3 (956 aa).

The N-terminal stretch at 1–22 is a signal peptide; it reads METQELRGALALLLLCFFTSAS. A Laminin G-like domain is found at 23-193; that stretch reads QDLQVIDLLT…VESMKIILGG (171 aa). Intrachain disulfides connect Cys278/Cys289, Cys283/Cys300, Cys303/Cys314, Cys320/Cys332, Cys326/Cys341, Cys344/Cys368, Cys374/Cys388, Cys382/Cys397, Cys400/Cys412, Cys418/Cys432, Cys426/Cys442, Cys444/Cys455, Cys471/Cys478, Cys483/Cys503, Cys519/Cys539, Cys542/Cys562, Cys578/Cys598, Cys601/Cys621, Cys639/Cys659, Cys679/Cys699, and Cys715/Cys936. Residue Asn310 is glycosylated (N-linked (GlcNAc...) asparagine). Residues 316–354 enclose the EGF-like 1; calcium-binding domain; the sequence is DINECAHADPCFPGSSCINTMPGFHCEACPRGYKGTQVS. Residues 370 to 410 enclose the EGF-like 2; calcium-binding domain; it reads DIDECNDGNNGGCDPNSICTNTVGSFKCGPCRLGFLGNQSQ. An N-linked (GlcNAc...) asparagine glycan is attached at Asn407. An EGF-like 3 domain is found at 414–456; that stretch reads PARTCHSPAHSPCHIHAHCLFERNGAVSCQCNVGWAGNGNVCG. TSP type-3 repeat units follow at residues 457–491, 492–527, 528–550, 551–586, 587–609, 610–647, 648–687, and 688–723; these read TDTD…NSGQ, EDAD…NKDQ, QNSD…NNDQ, KDTD…NPLQ, TDRD…NPTQ, TDAD…NSSQ, LDSD…NPNQ, and KDSD…EVTL. Disordered regions lie at residues 518 to 537 and 546 to 702; these read NCRL…SFGD and PNND…CEDD. Over residues 555 to 568 the composition is skewed to acidic residues; sequence GNGEGDACDNDVDG. Positions 612-628 are enriched in acidic residues; it reads ADSDLVGDVCDTNEDSD. A glycan (N-linked (GlcNAc...) asparagine) is linked at Asn644. The segment covering 650–667 has biased composition (acidic residues); that stretch reads SDNDGLGDECDGDDDNDG. The TSP C-terminal domain occupies 727–941; the sequence is RAYQTVVLDP…LQYRCNDTVP (215 aa). Asn937 is a glycosylation site (N-linked (GlcNAc...) asparagine).

This sequence belongs to the thrombospondin family. Oligomer; disulfide-linked.

Its function is as follows. Adhesive glycoprotein that mediates cell-to-cell and cell-to-matrix interactions. Can bind to fibrinogen, fibronectin, laminin and type V collagen. This chain is Thrombospondin-3 (THBS3), found in Homo sapiens (Human).